Consider the following 851-residue polypeptide: MAKPLTDQEKRRQISIRGIVGVENVAELKKGFNRHLHFTLVKDRNVATPRDYFFALAHTVRDHLVGRWIRTQQYYYEKCPKRVYYLSLEFYMGRTLQNTMINLGLQNACDEAIYQLGLDMEELEEIEEDAGLGNGGLGRLAACFLDSMATLGLAAYGYGIRYEYGIFNQKIRDGWQIEEADDWLRHGNPWEKARPEFMLPVHFYGRVEHTEAGTKWIDTQVVLALPYDTPVPGYLNNTVNTMRLWSARAPNDFNLRDFNVGDYIQAVLDRNLAENISRVLYPNDNFFEGKELRLKQEYFVVAATLQDVIRRFKASKFDSSNSAETAFDAFPDQVAIQLNDTHPALAIPELMRIFVDIEKLPWSKAWEITQKTFAYTNHTVLPEALERWPVELVENLLPRHLQIIYEINQKHLDKIAALFPKDVDRLRRMSLIEEEGVKRINMAHLCIVGSHAVNGVAKIHSDIVKTQVFKDFSELEPDKFQNKTNGITPRRWLLLCNPGLAELIAEKIGEDYVKDLSQLTKLNSFLGDDIFLREISNVKQENKLKFSQFLEKEYKVKINPSSMFDVQVKRIHEYKRQLLNCLHVVTMYNRIKKDPKKLFVPRTVIIGGKAAPGYYMAKLIIKLITSVAEVVNNDPMVGSKLKLIFLENYRVSLAEKVIPATDLSEQISTAGTEASGTGNMKFMQNGALTIGTMDGANVEMAEEAGEENLFIFGMRVEDVAALDKKGYEAKEYYEALPELKLAIDQIDKGFFSPKQPDLFKDLVNMLFYHDRFKVFADYEAYVKCQEKVSQLYMNPKAWNIMVLKNIAASGKFSSDRTIKEYARDIWNMEPSDIKISLSGEPSGGANKANGK.

Alanine 2 is subject to N-acetylalanine. Serine 15 bears the Phosphoserine; by PHK; in form phosphorylase a mark. Residues 43–45 (DRN), tyrosine 76, and arginine 310 contribute to the AMP site. Residue lysine 364 is modified to N6-succinyllysine. Lysine 470 is subject to N6-acetyllysine. Serine 524, serine 561, and serine 639 each carry phosphoserine. Lysine 681 is modified (N6-(pyridoxal phosphate)lysine). Residue lysine 796 is modified to N6-acetyllysine.

This sequence belongs to the glycogen phosphorylase family. Homodimer; enzymatically active. Interacts with PPP1R3B; recruits the phosphatase PP1 which dephosphorylates and inactivates PYGL/glycogen phosphorylase. Pyridoxal 5'-phosphate is required as a cofactor. In terms of processing, acetylation, which is up-regulated by glucose and insulin and down-regulated by glucagon, inhibits the glycogen phosphorylase activity by promoting PPP1R3B-mediated recruitment of phosphatase PP1 and Ser-15 dephosphorylation. Post-translationally, phosphorylation at Ser-15 converts inactive phosphorylase b into active phosphorylase a. Dephosphorylation of Ser-15 by phosphatase PP1 inactivates the enzyme.

Its subcellular location is the cytoplasm. It localises to the cytosol. It catalyses the reaction [(1-&gt;4)-alpha-D-glucosyl](n) + phosphate = [(1-&gt;4)-alpha-D-glucosyl](n-1) + alpha-D-glucose 1-phosphate. Allosterically regulated through the non-covalent binding of metabolites, being activated by AMP and inhibited by ATP, ADP, and glucose-6-phosphate. The activity is also controlled by post-translational modifications including phosphorylation and acetylation. In terms of biological role, allosteric enzyme that catalyzes the rate-limiting step in glycogen catabolism, the phosphorolytic cleavage of glycogen to produce glucose-1-phosphate, and plays a central role in maintaining cellular and organismal glucose homeostasis. The protein is Glycogen phosphorylase, liver form of Ovis aries (Sheep).